The sequence spans 478 residues: MLO-like protein 13 (478 aa).

At 1 to 10 (MAEARSGSLE) the chain is on the extracellular side. A helical membrane pass occupies residues 11–31 (YTPTWVVAFICFIIVLLSLLA). Residues 32-60 (ERGLHHLGKCLKRRQQDALFEALQKLKEE) lie on the Cytoplasmic side of the membrane. A helical membrane pass occupies residues 61–81 (LMLLGFISLMLTVSQAAIRHI). Over 82–145 (CVPPALVNNM…VSVEALHQLH (64 aa)) the chain is Extracellular. A helical membrane pass occupies residues 146-166 (IFIFVLAVFHVIFCASTMVLG). Topologically, residues 167–276 (GARIQQWKHW…LRTLEIDFKK (110 aa)) are cytoplasmic. The next 2 membrane-spanning stretches (helical) occupy residues 277 to 297 (VVSI…LNVG) and 298 to 318 (GWNT…MVGA). The Cytoplasmic portion of the chain corresponds to 319-360 (KLEYIISSLALDVSEKRSRAEEAVITPSDELFWFHRPGIVLQ). A helical membrane pass occupies residues 361–381 (LIHFILFQNSFEIAFFFWILF). Topologically, residues 382–400 (TYGIHSCIMEKLGYLIPRL) are extracellular. The helical transmembrane segment at 401–421 (VMGVLVQVLCSYSTLPLYALV) threads the bilayer. Topologically, residues 422–478 (TQMGSKFKKGIFDNVVQSTLEGWLEDTRNRGESTSEAHRIEMQPTTPESYNVQSENP) are cytoplasmic. Residues 435 to 456 (NVVQSTLEGWLEDTRNRGESTS) are calmodulin-binding. Residues 449–462 (RNRGESTSEAHRIE) show a composition bias toward basic and acidic residues. The disordered stretch occupies residues 449-478 (RNRGESTSEAHRIEMQPTTPESYNVQSENP). Residues 464 to 478 (QPTTPESYNVQSENP) are compositionally biased toward polar residues.

This sequence belongs to the MLO family.

It is found in the membrane. Its function is as follows. May be involved in modulation of pathogen defense and leaf cell death. Activity seems to be regulated by Ca(2+)-dependent calmodulin binding and seems not to require heterotrimeric G proteins. The polypeptide is MLO-like protein 13 (MLO13) (Arabidopsis thaliana (Mouse-ear cress)).